The sequence spans 414 residues: 3-phosphoshikimate 1-carboxyvinyltransferase (414 aa).

Residues Lys20, Ser21, and Arg25 each coordinate 3-phosphoshikimate. Lys20 contacts phosphoenolpyruvate. Residues Gly85 and Arg113 each contribute to the phosphoenolpyruvate site. Residues Ser154, Ser155, Gln156, Ser181, Asp296, and Lys323 each contribute to the 3-phosphoshikimate site. Gln156 is a phosphoenolpyruvate binding site. Asp296 (proton acceptor) is an active-site residue. Phosphoenolpyruvate-binding residues include Arg327, Arg371, and Lys395.

The protein belongs to the EPSP synthase family. As to quaternary structure, monomer.

The protein localises to the cytoplasm. It catalyses the reaction 3-phosphoshikimate + phosphoenolpyruvate = 5-O-(1-carboxyvinyl)-3-phosphoshikimate + phosphate. It participates in metabolic intermediate biosynthesis; chorismate biosynthesis. Functionally, catalyzes the transfer of the enolpyruvyl moiety of phosphoenolpyruvate (PEP) to the 5-hydroxyl of shikimate-3-phosphate (S3P) to produce enolpyruvyl shikimate-3-phosphate and inorganic phosphate. This Saccharolobus islandicus (strain M.14.25 / Kamchatka #1) (Sulfolobus islandicus) protein is 3-phosphoshikimate 1-carboxyvinyltransferase.